The primary structure comprises 208 residues: Transmembrane emp24 domain-containing protein p24beta2 (208 aa).

An N-terminal signal peptide occupies residues 1–21 (MSLKGTIVLLGLLWSFQATLG). Topologically, residues 22-176 (IRFVIDREEC…ENMSKRAVHK (155 aa)) are lumenal. One can recognise a GOLD domain in the interval 29-116 (EECFSHKAEY…HETIDFDVQL (88 aa)). The stretch at 134–149 (LMEQISKLEEALYNIQ) forms a coiled coil. N168 carries an N-linked (GlcNAc...) asparagine glycan. Residues 177-195 (ALFESFALIGASFLQVYLL) form a helical membrane-spanning segment. Residues 196–208 (RRLFERKLGMSRV) are Cytoplasmic-facing. The COPII vesicle coat-binding motif lies at 198 to 199 (LF). The short motif at 198-208 (LFERKLGMSRV) is the COPI vesicle coat-binding element. Positions 207-208 (RV) match the Required for the export from the endoplasmic reticulum to the Golgi motif.

The protein belongs to the EMP24/GP25L family. In terms of assembly, probably oligomerizes with other members of the EMP24/GP25L family. Associates with the COPI vesicle coat (coatomer). Associates with the COPII vesicle coat (coatomer). Interacts with p24delta5.

It localises to the golgi apparatus. Its subcellular location is the cis-Golgi network membrane. The protein resides in the golgi stack membrane. Its function is as follows. Involved in vesicular protein trafficking. Mainly functions in the early secretory pathway but also in post-Golgi membranes. Thought to act as cargo receptor at the lumenal side for incorporation of secretory cargo molecules into transport vesicles and to be involved in vesicle coat formation at the cytoplasmic side. Interacts with p24delta5 at endoplasmic reticulum export sites for endoplasmic reticulum exit and coupled transport to the Golgi apparatus. The sequence is that of Transmembrane emp24 domain-containing protein p24beta2 from Arabidopsis thaliana (Mouse-ear cress).